The sequence spans 86 residues: Cardiotoxin homolog TA-ctx-like (86 aa).

The N-terminal stretch at 1-21 (MKTLLLTLVVLTIACLDLGYT) is a signal peptide. 4 disulfides stabilise this stretch: cysteine 24-cysteine 45, cysteine 38-cysteine 62, cysteine 66-cysteine 78, and cysteine 79-cysteine 84.

It belongs to the three-finger toxin family. Short-chain subfamily. Orphan group IX sub-subfamily. Expressed by the venom gland.

Its subcellular location is the secreted. This is Cardiotoxin homolog TA-ctx-like from Bungarus multicinctus (Many-banded krait).